The primary structure comprises 633 residues: 1-deoxy-D-xylulose-5-phosphate synthase 2 (633 aa).

Thiamine diphosphate contacts are provided by residues His73 and 113–115 (SHA). Residue Asp145 participates in Mg(2+) binding. Residues 146–147 (GA), Asn175, Tyr286, and Glu367 contribute to the thiamine diphosphate site. Residue Asn175 participates in Mg(2+) binding.

The protein belongs to the transketolase family. DXPS subfamily. In terms of assembly, homodimer. Requires Mg(2+) as cofactor. Thiamine diphosphate is required as a cofactor.

It catalyses the reaction D-glyceraldehyde 3-phosphate + pyruvate + H(+) = 1-deoxy-D-xylulose 5-phosphate + CO2. It participates in metabolic intermediate biosynthesis; 1-deoxy-D-xylulose 5-phosphate biosynthesis; 1-deoxy-D-xylulose 5-phosphate from D-glyceraldehyde 3-phosphate and pyruvate: step 1/1. Functionally, catalyzes the acyloin condensation reaction between C atoms 2 and 3 of pyruvate and glyceraldehyde 3-phosphate to yield 1-deoxy-D-xylulose-5-phosphate (DXP). The polypeptide is 1-deoxy-D-xylulose-5-phosphate synthase 2 (Kitasatospora griseola (Streptomyces griseolosporeus)).